The following is a 271-amino-acid chain: Tryptophan synthase alpha chain (271 aa).

Residues Glu-49 and Asp-60 each act as proton acceptor in the active site.

The protein belongs to the TrpA family. In terms of assembly, tetramer of two alpha and two beta chains.

The catalysed reaction is (1S,2R)-1-C-(indol-3-yl)glycerol 3-phosphate + L-serine = D-glyceraldehyde 3-phosphate + L-tryptophan + H2O. It functions in the pathway amino-acid biosynthesis; L-tryptophan biosynthesis; L-tryptophan from chorismate: step 5/5. Its function is as follows. The alpha subunit is responsible for the aldol cleavage of indoleglycerol phosphate to indole and glyceraldehyde 3-phosphate. In Buchnera aphidicola subsp. Schizaphis graminum (strain Sg), this protein is Tryptophan synthase alpha chain.